The following is a 237-amino-acid chain: Ribonuclease PH (237 aa).

Phosphate contacts are provided by residues R86 and 124 to 126; that span reads GTR.

This sequence belongs to the RNase PH family. As to quaternary structure, homohexameric ring arranged as a trimer of dimers.

It carries out the reaction tRNA(n+1) + phosphate = tRNA(n) + a ribonucleoside 5'-diphosphate. Its function is as follows. Phosphorolytic 3'-5' exoribonuclease that plays an important role in tRNA 3'-end maturation. Removes nucleotide residues following the 3'-CCA terminus of tRNAs; can also add nucleotides to the ends of RNA molecules by using nucleoside diphosphates as substrates, but this may not be physiologically important. Probably plays a role in initiation of 16S rRNA degradation (leading to ribosome degradation) during starvation. The chain is Ribonuclease PH from Rhodopseudomonas palustris (strain HaA2).